Consider the following 557-residue polypeptide: Aerobic glycerol-3-phosphate dehydrogenase (557 aa).

An FAD-binding site is contributed by 21–49 (DVVIIGGGITGAGIALDASQRGMKVALVE).

It belongs to the FAD-dependent glycerol-3-phosphate dehydrogenase family. Requires FAD as cofactor.

It localises to the cytoplasm. The enzyme catalyses a quinone + sn-glycerol 3-phosphate = dihydroxyacetone phosphate + a quinol. The protein operates within polyol metabolism; glycerol degradation via glycerol kinase pathway; glycerone phosphate from sn-glycerol 3-phosphate (aerobic route): step 1/1. The sequence is that of Aerobic glycerol-3-phosphate dehydrogenase (glpD) from Staphylococcus haemolyticus (strain JCSC1435).